A 23-amino-acid polypeptide reads, in one-letter code: Hemocyanin subunit 4 (23 aa).

Belongs to the tyrosinase family. Hemocyanin subfamily. In terms of tissue distribution, hemolymph.

It is found in the secreted. The protein localises to the extracellular space. In terms of biological role, hemocyanins are copper-containing oxygen carriers occurring freely dissolved in the hemolymph of many mollusks and arthropods. In Carcinus maenas (Common shore crab), this protein is Hemocyanin subunit 4.